A 297-amino-acid chain; its full sequence is 33 kDa chaperonin (297 aa).

Disulfide bonds link C239–C241 and C272–C275.

Belongs to the HSP33 family. In terms of processing, under oxidizing conditions two disulfide bonds are formed involving the reactive cysteines. Under reducing conditions zinc is bound to the reactive cysteines and the protein is inactive.

It localises to the cytoplasm. Redox regulated molecular chaperone. Protects both thermally unfolding and oxidatively damaged proteins from irreversible aggregation. Plays an important role in the bacterial defense system toward oxidative stress. The polypeptide is 33 kDa chaperonin (Synechococcus elongatus (strain ATCC 33912 / PCC 7942 / FACHB-805) (Anacystis nidulans R2)).